The primary structure comprises 780 residues: Ribosome biogenesis protein BOP1 homolog (780 aa).

The segment covering 1-11 (MTKKQAIKRKV) has biased composition (basic residues). Residues 1–155 (MTKKQAIKRK…DSDTSDEEDI (155 aa)) form a disordered region. The segment covering 17–26 (TNEQSSASEP) has biased composition (polar residues). Composition is skewed to acidic residues over residues 44–53 (EDTTDDEGID), 60–72 (SSED…DEEG), 83–113 (AEGD…DAEE), and 145–154 (EDSDTSDEED). 7 WD repeats span residues 441 to 482 (GHTD…RTIE), 484 to 522 (NDVV…KLLI), 566 to 608 (THFK…SQIP), 611 to 649 (KSKG…LIKK), 652 to 691 (TNSK…KPYQ), 695 to 734 (LHRN…DLLQ), and 750 to 780 (RDEF…RLYT).

The protein belongs to the WD repeat BOP1/ERB1 family.

It is found in the nucleus. The protein localises to the nucleolus. Its subcellular location is the nucleoplasm. Required for maturation of ribosomal RNAs and formation of the large ribosomal subunit. In Drosophila virilis (Fruit fly), this protein is Ribosome biogenesis protein BOP1 homolog.